A 493-amino-acid chain; its full sequence is MPLYSVTVKWGKEKFEGVELNTDEPPMVFKAQLFALTGVQPARQKVMVKGGTLKDDDWGNIKIKNGMTLLMMGSADALPEEPSAKTVFVEDMTEEQLASAMELPCGLTNLGNTCYMNATVQCIRSVPELKDALKRYAGALRASGEMASAQYITAALRDLFDSMDKTSSSIPPIILLQFLHMAFPQFAEKGEQGQYLQQDANECWIQMMRVLQQKLEAIEDDSVKETDSSSASAATPSKKKSLIDQFFGVEFETTMKCTESEEEEVTKGKENQLQLSCFINQEVKYLFTGLKLRLQEEITKQSPTLQRNALYIKSSKISRLPAYLTIQMVRFFYKEKESVNAKVLKDVKFPLMLDMYELCTPELQEKMVSFRSKFKDLEDKKVNQQPNTSDKKSSPQKEVKYEPFSFADDIGSNNCGYYDLQAVLTHQGRSSSSGHYVSWVKRKQDEWIKFDDDKVSIVTPEDILRLSGGGDWHIAYVLLYGPRRVEIMEEESE.

Residues 4–80 (YSVTVKWGKE…MMGSADALPE (77 aa)) form the Ubiquitin-like domain. T52 is modified (phosphothreonine). In terms of domain architecture, USP spans 105–483 (CGLTNLGNTC…IAYVLLYGPR (379 aa)). The Nucleophile role is filled by C114. Phosphoserine is present on residues S143 and S148. T235 carries the phosphothreonine modification. 3 positions are modified to phosphoserine: S237, S302, and S432. The Proton acceptor role is filled by H435. K449 carries the post-translational modification N6-acetyllysine.

This sequence belongs to the peptidase C19 family. USP14/UBP6 subfamily. In terms of assembly, homodimer (Potential). Associates with the 26S proteasome. Interacts with FANCC, CXCR4 and ERN1. Interacts with TRIM14; this interaction recruits USP14 to cleave ubiquitin chains of CGAS and KDM4D.

The protein localises to the cytoplasm. Its subcellular location is the cell membrane. It catalyses the reaction Thiol-dependent hydrolysis of ester, thioester, amide, peptide and isopeptide bonds formed by the C-terminal Gly of ubiquitin (a 76-residue protein attached to proteins as an intracellular targeting signal).. Proteasome-associated deubiquitinase which releases ubiquitin from the proteasome targeted ubiquitinated proteins. Ensures the regeneration of ubiquitin at the proteasome. Is a reversibly associated subunit of the proteasome and a large fraction of proteasome-free protein exists within the cell. Required for the degradation of the chemokine receptor CXCR4 which is critical for CXCL12-induced cell chemotaxis. Also serves as a physiological inhibitor of endoplasmic reticulum-associated degradation (ERAD) under the non-stressed condition by inhibiting the degradation of unfolded endoplasmic reticulum proteins via interaction with ERN1. Indispensable for synaptic development and function at neuromuscular junctions (NMJs). Plays a role in the innate immune defense against viruses by stabilizing the viral DNA sensor CGAS and thus inhibiting its autophagic degradation. Inhibits OPTN-mediated selective autophagic degradation of KDM4D and thereby negatively regulates H3K9me2 and H3K9me3. The sequence is that of Ubiquitin carboxyl-terminal hydrolase 14 (USP14) from Pan troglodytes (Chimpanzee).